Reading from the N-terminus, the 170-residue chain is Acireductone dioxygenase (170 aa).

Residues His-99, His-101, Glu-105, and His-144 each coordinate Fe(2+). His-99, His-101, Glu-105, and His-144 together coordinate Ni(2+).

Belongs to the acireductone dioxygenase (ARD) family. Monomer. The cofactor is Fe(2+). Requires Ni(2+) as cofactor.

The catalysed reaction is 1,2-dihydroxy-5-(methylsulfanyl)pent-1-en-3-one + O2 = 3-(methylsulfanyl)propanoate + CO + formate + 2 H(+). It catalyses the reaction 1,2-dihydroxy-5-(methylsulfanyl)pent-1-en-3-one + O2 = 4-methylsulfanyl-2-oxobutanoate + formate + 2 H(+). It participates in amino-acid biosynthesis; L-methionine biosynthesis via salvage pathway; L-methionine from S-methyl-5-thio-alpha-D-ribose 1-phosphate: step 5/6. In terms of biological role, catalyzes 2 different reactions between oxygen and the acireductone 1,2-dihydroxy-3-keto-5-methylthiopentene (DHK-MTPene) depending upon the metal bound in the active site. Fe-containing acireductone dioxygenase (Fe-ARD) produces formate and 2-keto-4-methylthiobutyrate (KMTB), the alpha-ketoacid precursor of methionine in the methionine recycle pathway. Ni-containing acireductone dioxygenase (Ni-ARD) produces methylthiopropionate, carbon monoxide and formate, and does not lie on the methionine recycle pathway. The chain is Acireductone dioxygenase from Bacillus cereus (strain ATCC 14579 / DSM 31 / CCUG 7414 / JCM 2152 / NBRC 15305 / NCIMB 9373 / NCTC 2599 / NRRL B-3711).